A 222-amino-acid polypeptide reads, in one-letter code: 2-C-methyl-D-erythritol 2,4-cyclodiphosphate synthase, chloroplastic (222 aa).

The N-terminal 43 residues, 1-43 (MATASSLFLASPVATAPTARARSTPSASPARPSLRLRRPSTLA), are a transit peptide targeting the chloroplast. Residues D73 and H75 each contribute to the a divalent metal cation site. Substrate contacts are provided by residues 73–75 (DLH), 99–100 (HS), 103–111 (DVLLHCVVD), 121–123 (DIG), 126–130 (FPDSD), D130, 165–171 (LQKPKIS), and 196–200 (AKTHE). H107 is a binding site for a divalent metal cation.

The protein belongs to the IspF family. As to quaternary structure, homotrimer. Requires a divalent metal cation as cofactor. As to expression, expressed in roots, leaves, stems, leaf sheaths and young panicles.

Its subcellular location is the plastid. It is found in the chloroplast. It carries out the reaction 4-CDP-2-C-methyl-D-erythritol 2-phosphate = 2-C-methyl-D-erythritol 2,4-cyclic diphosphate + CMP. It functions in the pathway isoprenoid biosynthesis; isopentenyl diphosphate biosynthesis via DXP pathway; isopentenyl diphosphate from 1-deoxy-D-xylulose 5-phosphate: step 4/6. Enzyme of the plastid non-mevalonate pathway for isoprenoid biosynthesis that converts 4-diphosphocytidyl-2C-methyl-D-erythritol 2-phosphate into 2C-methyl-D-erythritol 2,4-cyclodiphosphate and CMP. Is essential for chloroplast development. In Oryza sativa subsp. japonica (Rice), this protein is 2-C-methyl-D-erythritol 2,4-cyclodiphosphate synthase, chloroplastic.